The primary structure comprises 683 residues: DNA-directed RNA polymerase subunit beta' (683 aa).

Zn(2+)-binding residues include Cys69, Cys71, Cys87, and Cys90. Asp492, Asp494, and Asp496 together coordinate Mg(2+).

Belongs to the RNA polymerase beta' chain family. RpoC1 subfamily. In terms of assembly, in plastids the minimal PEP RNA polymerase catalytic core is composed of four subunits: alpha, beta, beta', and beta''. When a (nuclear-encoded) sigma factor is associated with the core the holoenzyme is formed, which can initiate transcription. Mg(2+) is required as a cofactor. Requires Zn(2+) as cofactor.

It localises to the plastid. The protein resides in the chloroplast. The catalysed reaction is RNA(n) + a ribonucleoside 5'-triphosphate = RNA(n+1) + diphosphate. In terms of biological role, DNA-dependent RNA polymerase catalyzes the transcription of DNA into RNA using the four ribonucleoside triphosphates as substrates. The sequence is that of DNA-directed RNA polymerase subunit beta' from Coffea arabica (Arabian coffee).